The sequence spans 501 residues: Lysine--tRNA ligase (501 aa).

Residues Glu-411 and Glu-418 each contribute to the Mg(2+) site.

It belongs to the class-II aminoacyl-tRNA synthetase family. In terms of assembly, homodimer. The cofactor is Mg(2+).

The protein resides in the cytoplasm. It catalyses the reaction tRNA(Lys) + L-lysine + ATP = L-lysyl-tRNA(Lys) + AMP + diphosphate. The polypeptide is Lysine--tRNA ligase (Shewanella woodyi (strain ATCC 51908 / MS32)).